The sequence spans 317 residues: Trem-like transcript 1 protein (317 aa).

The N-terminal stretch at 1 to 20 is a signal peptide; the sequence is MDCYLLLLLLLLGLAGQGSA. The Ig-like V-type domain occupies 21–122; it reads DSHPEVLQAP…PQTLHRVSLL (102 aa). Topologically, residues 21-175 are extracellular; sequence DSHPEVLQAP…EFRRRENSIP (155 aa). 2 disulfides stabilise this stretch: C39-C105 and C53-C60. Residues 147-166 are disordered; sequence TGSLLEDPSLDPSASAGPHE. Residues 176–196 form a helical membrane-spanning segment; it reads LIWGAVLLLALVVVAVVIFAV. At 197-317 the chain is on the cytoplasmic side; it reads MARKKGNRLV…PPNSQTPPSK (121 aa). C208 is lipidated: S-palmitoyl cysteine. The disordered stretch occupies residues 212-278; that stretch reads QSTGVPGMDP…SQPPLPPKVL (67 aa). Over residues 261–275 the composition is skewed to pro residues; it reads SSEPPAPPSQPPLPP. S283 is modified (phosphoserine). An ITIM motif is present at residues 284–289; sequence VTYATV. The tract at residues 295–317 is disordered; sequence DKGKIASCEPVQDPPNSQTPPSK. Residues 308–317 are compositionally biased toward polar residues; it reads PPNSQTPPSK.

In terms of assembly, when phosphorylated, interacts with PTPN11. When phosphorylated, interacts with PTPN6. Phosphorylated on tyrosine residues. Highly expressed in bone marrow leukocytes, splenic megakaryocytes and platelets. Detected in brain, liver and in peritoneal monocytes.

Its subcellular location is the cell membrane. It localises to the cytoplasm. Functionally, cell surface receptor that may play a role in the innate and adaptive immune response. This chain is Trem-like transcript 1 protein (Treml1), found in Mus musculus (Mouse).